The following is a 316-amino-acid chain: Na(+)-translocating NADH-quinone reductase subunit C (316 aa).

Residues Trp13–Val33 traverse the membrane as a helical segment. Thr280 bears the FMN phosphoryl threonine mark.

This sequence belongs to the NqrC family. Composed of six subunits; NqrA, NqrB, NqrC, NqrD, NqrE and NqrF. Requires FMN as cofactor.

Its subcellular location is the cell inner membrane. It carries out the reaction a ubiquinone + n Na(+)(in) + NADH + H(+) = a ubiquinol + n Na(+)(out) + NAD(+). NQR complex catalyzes the reduction of ubiquinone-1 to ubiquinol by two successive reactions, coupled with the transport of Na(+) ions from the cytoplasm to the periplasm. NqrA to NqrE are probably involved in the second step, the conversion of ubisemiquinone to ubiquinol. This Chlamydia trachomatis serovar D (strain ATCC VR-885 / DSM 19411 / UW-3/Cx) protein is Na(+)-translocating NADH-quinone reductase subunit C.